Here is a 189-residue protein sequence, read N- to C-terminus: Phomopsin biosynthesis cluster protein C' (189 aa).

This sequence belongs to the oryJ family.

Part of the gene cluster that mediates the biosynthesis of the phomopsins, a group of hexapeptide mycotoxins which infects lupins and causes lupinosis disease in livestock. The role of phomC' within the phomopsins biosynthesis pathway has still to be determined. The pathway starts with the processing of the precursor phomA by several endopeptidases including kexin proteases as well as the cluster-specific S41 family peptidase phomP1 and the oligopeptidase phomG to produce 10 identical copies of the hexapeptide Tyr-Val-Ile-Pro-Ile-Asp. After being excised from the precursor peptide, the core peptides are cyclized and modified post-translationally by enzymes encoded within the gene cluster. The timing and order of proteolysis of the phomA precursor and PTMs are still unknown. Two tyrosinase-like enzymes, phomQ1 and phomQ2, catalyze the chlorination and hydroxylation of Tyr, respectively. PhomYb, is proposed to be involved in the construction of the macrocyclic structure. The other 4 ustYa family proteins may be involved in PTMs that generate the unique structure of phomopsin A. PhomYa is required for the hydroxylation of C-beta of Tyr. PhomYc, phomYd, and phomYe are responsible for the biosynthesis of 2,3-dehydroisoleucine (dIle), 2,3-dehydroaspartic acid (dAsp), and 3,4-dehydroproline (dPro), respectively. While dIle formation by phomYc is indispensable for the installation of dAsp by phomYd, the order of the other PTMs have not been elucidated yet. Most of the biosynthetic enzymes likely have broad substrate specificity, and thus, there might be a metabolic grid from a precursor to phomopsin A. The enzyme(s) responsible for the biosynthesis of 3,4-dehydrovaline (dVal) have also not been identified yet. Finally, phomM acts as an S-adenosylmethionine-dependent alpha-N-methyltransferase that catalyzes two successive N-methylation reactions, converting N-desmethyl-phomopsin A to phomopsin A and phomopsin A further to an N,N-dimethylated congener called phomopsin E. The chain is Phomopsin biosynthesis cluster protein C' from Diaporthe leptostromiformis (Lupinosis disease fungus).